The primary structure comprises 283 residues: Elongation factor Ts (283 aa).

The tract at residues 80-83 is involved in Mg(2+) ion dislocation from EF-Tu; sequence TDFV.

This sequence belongs to the EF-Ts family.

The protein localises to the cytoplasm. Functionally, associates with the EF-Tu.GDP complex and induces the exchange of GDP to GTP. It remains bound to the aminoacyl-tRNA.EF-Tu.GTP complex up to the GTP hydrolysis stage on the ribosome. The polypeptide is Elongation factor Ts (Actinobacillus succinogenes (strain ATCC 55618 / DSM 22257 / CCUG 43843 / 130Z)).